Consider the following 236-residue polypeptide: SERTA domain-containing protein 1 (236 aa).

The SERTA domain occupies 38 to 85; sequence PTVASSSLFDLSVVKLHHSLRQSEPDLRHLVLVVNTLRRIQASMEPAP. The disordered stretch occupies residues 190–211; the sequence is ASEGLKPGPENGPAKEEPPELD.

Interacts with the PHD-bromodomain of TIF1, TRIM28/TIF1B and p300/CBP. Interacts with E2F1 and TFDP1; modulates transactivation activity of TFDP1/E2F complexes. Also interacts with CDK4. In terms of processing, polyubiquitinated, which promotes proteasomal degradation. Detected at in testis, lung and, at lower levels, in muscle, liver, spleen, brain and heart.

In terms of biological role, acts at E2F-responsive promoters as coregulator to integrate signals provided by PHD- and/or bromodomain-containing transcription factors. Stimulates E2F1/TFDP1 transcriptional activity. Renders the activity of cyclin D1/CDK4 resistant to the inhibitory effects of CDKN2A/p16INK4A. The chain is SERTA domain-containing protein 1 (Sertad1) from Mus musculus (Mouse).